The chain runs to 408 residues: Argininosuccinate synthase (408 aa).

8 to 16 (AYSGGLDTS) contacts ATP. Tyr86 contributes to the L-citrulline binding site. Gly116 lines the ATP pocket. Residues Thr118, Asn122, and Asp123 each coordinate L-aspartate. Asn122 contributes to the L-citrulline binding site. L-citrulline contacts are provided by Arg126, Ser174, Glu259, and Tyr271.

It belongs to the argininosuccinate synthase family. Type 1 subfamily. Homotetramer.

It is found in the cytoplasm. The catalysed reaction is L-citrulline + L-aspartate + ATP = 2-(N(omega)-L-arginino)succinate + AMP + diphosphate + H(+). It participates in amino-acid biosynthesis; L-arginine biosynthesis; L-arginine from L-ornithine and carbamoyl phosphate: step 2/3. This is Argininosuccinate synthase from Leuconostoc mesenteroides subsp. mesenteroides (strain ATCC 8293 / DSM 20343 / BCRC 11652 / CCM 1803 / JCM 6124 / NCDO 523 / NBRC 100496 / NCIMB 8023 / NCTC 12954 / NRRL B-1118 / 37Y).